The chain runs to 359 residues: Guanine nucleotide-binding protein subunit alpha-11 (359 aa).

S-palmitoyl cysteine attachment occurs at residues Cys-9 and Cys-10. Residues 38–359 (RELKLLLLGT…QLNLKEYNLV (322 aa)) form the G-alpha domain. Residues 41 to 54 (KLLLLGTGESGKST) are G1 motif. Residues 46–53 (GTGESGKS) and 180–183 (LRVR) each bind GTP. Mg(2+) is bound at residue Ser-53. Residues 178-186 (DVLRVRVPT) are G2 motif. Thr-186 is a Mg(2+) binding site. Residues 201–210 (FRMVDVGGQR) are G3 motif. Deamidated glutamine; by Photorhabdus PAU_02230 is present on Gln-209. The G4 motif stretch occupies residues 270 to 277 (ILFLNKKD). GTP contacts are provided by residues 274 to 277 (NKKD) and Ala-331. The tract at residues 329–334 (TCATDT) is G5 motif.

It belongs to the G-alpha family. G(q) subfamily. As to quaternary structure, g proteins are composed of 3 units; alpha, beta and gamma. The alpha chain contains the guanine nucleotide binding site. Interacts with RGS22. Interacts with NTSR1. In terms of assembly, (Microbial infection) Interacts with human cytomegalovirus (HHV-5) US28. Post-translationally, (Microbial infection) Deamidated at Gln-209 by Photorhabdus asymbiotica toxin PAU_02230, blocking GTP hydrolysis of heterotrimeric GNAQ or GNA11 and G-alphai (GNAI1, GNAI2 or GNAI3) proteins, thereby activating RhoA. In terms of tissue distribution, expressed in testis.

The protein localises to the cell membrane. It is found in the cytoplasm. The enzyme catalyses GTP + H2O = GDP + phosphate + H(+). Its function is as follows. Guanine nucleotide-binding proteins (G proteins) function as transducers downstream of G protein-coupled receptors (GPCRs) in numerous signaling cascades. The alpha chain contains the guanine nucleotide binding site and alternates between an active, GTP-bound state and an inactive, GDP-bound state. Signaling by an activated GPCR promotes GDP release and GTP binding. The alpha subunit has a low GTPase activity that converts bound GTP to GDP, thereby terminating the signal. Both GDP release and GTP hydrolysis are modulated by numerous regulatory proteins. Signaling is mediated via phospholipase C-beta-dependent inositol lipid hydrolysis for signal propagation: activates phospholipase C-beta: following GPCR activation, GNA11 activates PLC-beta (PLCB1, PLCB2, PLCB3 or PLCB4), leading to production of diacylglycerol (DAG) and inositol 1,4,5-trisphosphate (IP3). Transduces FFAR4 signaling in response to long-chain fatty acids (LCFAs). Together with GNAQ, required for heart development. In the respiratory epithelium, transmits OXGR1-dependent signals that lead to downstream intracellular Ca(2+) release and mucocilliary clearance of airborne pathogens. The chain is Guanine nucleotide-binding protein subunit alpha-11 (GNA11) from Homo sapiens (Human).